Reading from the N-terminus, the 254-residue chain is Major prion protein (254 aa).

A signal peptide spans 1 to 22; the sequence is MANLGYWLLALFVTMWTDVGLC. An interaction with ADGRG6 region spans residues 23 to 38; sequence KKRPKPGGWNTGGSRY. The segment at 23 to 231 is interaction with GRB2, ERI3 and SYN1; it reads KKRPKPGGWN…QAYYDGRRSS (209 aa). The interval 25–104 is disordered; the sequence is RPKPGGWNTG…HNQWNKPSKP (80 aa). Pro-44 is modified (hydroxyproline). 5 tandem repeats follow at residues 51–58, 59–66, 67–74, 75–82, and 83–90. A 5 X 8 AA tandem repeats of P-H-G-G-G-W-G-Q region spans residues 51–90; that stretch reads PQGGTWGQPHGGGWGQPHGGSWGQPHGGSWGQPHGGGWGQ. Over residues 54–94 the composition is skewed to gly residues; it reads GTWGQPHGGGWGQPHGGSWGQPHGGSWGQPHGGGWGQGGGT. Cu(2+)-binding residues include His-60, Gly-61, Gly-62, His-68, Gly-69, Gly-70, His-76, Gly-77, Gly-78, His-84, Gly-85, and Gly-86. Cys-178 and Cys-213 are oxidised to a cystine. Asn-180 and Asn-196 each carry an N-linked (GlcNAc...) asparagine glycan. Residue Ser-230 is the site of GPI-anchor amidated serine attachment. The propeptide at 231–254 is removed in mature form; that stretch reads SSTVLFSSPPVILLISFLIFLIVG.

The protein belongs to the prion family. Monomer and homodimer. Has a tendency to aggregate into amyloid fibrils containing a cross-beta spine, formed by a steric zipper of superposed beta-strands. Soluble oligomers may represent an intermediate stage on the path to fibril formation. Copper binding may promote oligomerization. Interacts with GRB2, APP, ERI3/PRNPIP and SYN1. Mislocalized cytosolically exposed PrP interacts with MGRN1; this interaction alters MGRN1 subcellular location and causes lysosomal enlargement. Interacts with APP. Interacts with KIAA1191. Interacts with ADGRG6. N-glycosylated. As to expression, highly expressed in the brain, lung, kidney and heart. Expressed at low levels in the liver and spleen.

Its subcellular location is the cell membrane. It localises to the golgi apparatus. Its primary physiological function is unclear. May play a role in neuronal development and synaptic plasticity. May be required for neuronal myelin sheath maintenance. May promote myelin homeostasis through acting as an agonist for ADGRG6 receptor. May play a role in iron uptake and iron homeostasis. Soluble oligomers are toxic to cultured neuroblastoma cells and induce apoptosis (in vitro). Association with GPC1 (via its heparan sulfate chains) targets PRNP to lipid rafts. Also provides Cu(2+) or Zn(2+) for the ascorbate-mediated GPC1 deaminase degradation of its heparan sulfate side chains. In Mus musculus (Mouse), this protein is Major prion protein (Prnp).